The chain runs to 475 residues: Aspartyl/glutamyl-tRNA(Asn/Gln) amidotransferase subunit B (475 aa).

It belongs to the GatB/GatE family. GatB subfamily. Heterotrimer of A, B and C subunits.

The enzyme catalyses L-glutamyl-tRNA(Gln) + L-glutamine + ATP + H2O = L-glutaminyl-tRNA(Gln) + L-glutamate + ADP + phosphate + H(+). It carries out the reaction L-aspartyl-tRNA(Asn) + L-glutamine + ATP + H2O = L-asparaginyl-tRNA(Asn) + L-glutamate + ADP + phosphate + 2 H(+). Allows the formation of correctly charged Asn-tRNA(Asn) or Gln-tRNA(Gln) through the transamidation of misacylated Asp-tRNA(Asn) or Glu-tRNA(Gln) in organisms which lack either or both of asparaginyl-tRNA or glutaminyl-tRNA synthetases. The reaction takes place in the presence of glutamine and ATP through an activated phospho-Asp-tRNA(Asn) or phospho-Glu-tRNA(Gln). The protein is Aspartyl/glutamyl-tRNA(Asn/Gln) amidotransferase subunit B of Staphylococcus aureus (strain MRSA252).